The primary structure comprises 338 residues: Putative acyl-[acyl-carrier-protein] desaturase DesA1 (338 aa).

Fe cation-binding residues include E76, E107, H110, E167, E197, and H200. The span at 314–328 shows a compositional bias: basic and acidic residues; it reads EARTGKKVSAHELHK. Positions 314-338 are disordered; sequence EARTGKKVSAHELHKTAGKLAMSRR.

The protein belongs to the fatty acid desaturase type 2 family. Homodimer. Requires Fe(2+) as cofactor.

The protein resides in the cell surface. The protein operates within lipid metabolism; fatty acid metabolism. Its function is as follows. May be a desaturase involved in mycobacterial fatty acid biosynthesis. This chain is Putative acyl-[acyl-carrier-protein] desaturase DesA1 (desA1), found in Mycobacterium tuberculosis (strain CDC 1551 / Oshkosh).